Consider the following 442-residue polypeptide: DNA topoisomerase medium subunit (442 aa).

In terms of domain architecture, Topo IIA-type catalytic spans Ile29 to Leu438. The active-site O-(5'-phospho-DNA)-tyrosine intermediate is the Tyr117.

It belongs to the type II topoisomerase family. In terms of assembly, part of the DNA topoisomerase complex made of gp39, gp52 and gp60. Mg(2+) is required as a cofactor.

It catalyses the reaction ATP-dependent breakage, passage and rejoining of double-stranded DNA.. Medium subunit of the DNA topoisomerase that untwists superhelical DNA. Controls topological states of double-stranded DNA by transient breakage and subsequent rejoining of DNA strands. This Enterobacteria phage T4 (Bacteriophage T4) protein is DNA topoisomerase medium subunit (52).